The sequence spans 181 residues: Ras-like protein 1 (181 aa).

10 to 17 is a binding site for GTP; sequence GAGGVGKS. The short motif at 32–40 is the Effector region element; the sequence is YDPTIEDSY. GTP is bound by residues 57-61 and 116-119; these read DTAGQ and NKCD. C178 is modified (cysteine methyl ester). A lipid anchor (S-geranylgeranyl cysteine) is attached at C178. Positions 179-181 are cleaved as a propeptide — removed in mature form; that stretch reads KML.

Belongs to the small GTPase superfamily. Ras family.

Its subcellular location is the cell membrane. The enzyme catalyses GTP + H2O = GDP + phosphate + H(+). With respect to regulation, alternates between an inactive form bound to GDP and an active form bound to GTP. Activated by a guanine nucleotide-exchange factor (GEF) and inactivated by a GTPase-activating protein (GAP). In terms of biological role, ras proteins bind GDP/GTP and possess intrinsic GTPase activity. Plays a role in eye development by regulating cell growth, survival of postmitotic ommatidial cells and differentiation of photoreceptor cells. During larval development, mediates Ptth/tor signaling leading to the production of ecdysone, a hormone required for the initiation of metamorphosis. The protein is Ras-like protein 1 of Drosophila mojavensis (Fruit fly).